We begin with the raw amino-acid sequence, 505 residues long: Putative thymidine phosphorylase (505 aa).

Belongs to the thymidine/pyrimidine-nucleoside phosphorylase family. Type 2 subfamily.

The enzyme catalyses thymidine + phosphate = 2-deoxy-alpha-D-ribose 1-phosphate + thymine. In Parvibaculum lavamentivorans (strain DS-1 / DSM 13023 / NCIMB 13966), this protein is Putative thymidine phosphorylase.